The primary structure comprises 92 residues: Transcription factor ILI6 (92 aa).

Residues 1 to 20 (MSSRRSRSRQSGSSRITDEQ) form a disordered region. Residues 5–59 (RSRSRQSGSSRITDEQISDLVSKLQDLLPEARLRSNDRVPSSRVLQETCNYIRSL) enclose the bHLH domain.

Belongs to the bHLH protein family. As to quaternary structure, interacts with APG.

It localises to the nucleus. Functionally, atypical and probable non DNA-binding bHLH transcription factor that acts as a positive regulator of grain size. Binds the transcription repressor APG and forms a heterodimer of antagonistic bHLH transcription factors that regulates grain length and weight by controlling cell elongation in lemma and palea. May be involved in the control of lamina inclination through brassinosteroid signaling pathway. The polypeptide is Transcription factor ILI6 (ILI6) (Oryza sativa subsp. indica (Rice)).